We begin with the raw amino-acid sequence, 76 residues long: MYSFVSEETGTLIVNSVLLFFAFVVFLLVTLAILTALRLCAYCCNIVNVSLVKPTVYVYSRVKNLNSSEGVPDLLV.

Residues 1 to 16 (MYSFVSEETGTLIVNS) lie on the Virion surface side of the membrane. A helical membrane pass occupies residues 17–37 (VLLFFAFVVFLLVTLAILTAL). Topologically, residues 38-76 (RLCAYCCNIVNVSLVKPTVYVYSRVKNLNSSEGVPDLLV) are intravirion.

Belongs to the betacoronaviruses E protein family. Homopentamer. Interacts with membrane protein M in the budding compartment of the host cell, which is located between endoplasmic reticulum and the Golgi complex. Interacts with Nucleoprotein.

The protein localises to the host Golgi apparatus membrane. Functionally, plays a central role in virus morphogenesis and assembly. Acts as a viroporin and self-assembles in host membranes forming pentameric protein-lipid pores that allow ion transport. Also plays a role in the induction of apoptosis. The chain is Envelope small membrane protein from Rhinolophus macrotis (Big-eared horseshoe bat).